Here is a 141-residue protein sequence, read N- to C-terminus: MASCNMASAASNFLVATPNVASNTNTSRTTMLFFSSKNYGSTAPRLVVRAAEEAAPPAAAATAEPAEAPVKAAKPPPIGPKRGTKVRILRKESYWYKGTGSVVACDQDPNTRYPVVVRFNKVNYANVSTNNYALDEIEEVK.

Residues 1–49 constitute a chloroplast transit peptide; the sequence is MASCNMASAASNFLVATPNVASNTNTSRTTMLFFSSKNYGSTAPRLVVR. A compositionally biased stretch (low complexity) spans 57–73; that stretch reads PAAAATAEPAEAPVKAA. The segment at 57-83 is disordered; sequence PAAAATAEPAEAPVKAAKPPPIGPKRG.

Belongs to the PsaE family. Post-translationally, 2 isoforms exists (ratio 1:1). With or without the N-terminal alanine.

It is found in the plastid. The protein resides in the chloroplast thylakoid membrane. In terms of biological role, stabilizes the interaction between PsaC and the PSI core, assists the docking of the ferredoxin to PSI and interacts with ferredoxin-NADP oxidoreductase. The protein is Photosystem I reaction center subunit IV A, chloroplastic (PSAEA) of Nicotiana sylvestris (Wood tobacco).